Here is a 51-residue protein sequence, read N- to C-terminus: Ovomucoid (51 aa).

The Kazal-like domain occupies 1–49 (VDCSEYPQPACTTERRPVCGSNNKTYSNKCNFCNAVVKSNGTLTVSHFG). Disulfide bonds link Cys-3-Cys-33, Cys-11-Cys-30, and Cys-19-Cys-51. Residue Asn-40 is glycosylated (N-linked (GlcNAc...) asparagine).

It is found in the secreted. The sequence is that of Ovomucoid from Polyplectron napoleonis (Palawan peacock-pheasant).